Here is a 361-residue protein sequence, read N- to C-terminus: Histidinol-phosphate aminotransferase (361 aa).

N6-(pyridoxal phosphate)lysine is present on Lys221.

Belongs to the class-II pyridoxal-phosphate-dependent aminotransferase family. Histidinol-phosphate aminotransferase subfamily. Pyridoxal 5'-phosphate is required as a cofactor.

The catalysed reaction is L-histidinol phosphate + 2-oxoglutarate = 3-(imidazol-4-yl)-2-oxopropyl phosphate + L-glutamate. The protein operates within amino-acid biosynthesis; L-histidine biosynthesis; L-histidine from 5-phospho-alpha-D-ribose 1-diphosphate: step 7/9. In Methanocella arvoryzae (strain DSM 22066 / NBRC 105507 / MRE50), this protein is Histidinol-phosphate aminotransferase.